Here is a 387-residue protein sequence, read N- to C-terminus: Type 2 DNA topoisomerase 6 subunit A (387 aa).

Residues 12 to 160 (EARKKALAVF…MLILSKEKGK (149 aa)) form the Topo IIA-type catalytic domain. Y106 serves as the catalytic O-(5'-phospho-DNA)-tyrosine intermediate. E207 and D259 together coordinate Mg(2+).

This sequence belongs to the TOP6A family. Homodimer. Heterotetramer of two Top6A and two Top6B chains. Requires Mg(2+) as cofactor.

It carries out the reaction ATP-dependent breakage, passage and rejoining of double-stranded DNA.. Its function is as follows. Relaxes both positive and negative superturns and exhibits a strong decatenase activity. The sequence is that of Type 2 DNA topoisomerase 6 subunit A from Hyperthermus butylicus (strain DSM 5456 / JCM 9403 / PLM1-5).